We begin with the raw amino-acid sequence, 597 residues long: Aspartate--tRNA(Asp/Asn) ligase (597 aa).

Glu-175 contacts L-aspartate. Residues 199–202 form an aspartate region; it reads QQYK. 2 residues coordinate L-aspartate: Arg-221 and His-454. 221–223 serves as a coordination point for ATP; it reads RDE. An ATP-binding site is contributed by Glu-488. Residue Arg-495 participates in L-aspartate binding. An ATP-binding site is contributed by 540–543; the sequence is GIDR.

The protein belongs to the class-II aminoacyl-tRNA synthetase family. Type 1 subfamily. Homodimer.

It is found in the cytoplasm. The catalysed reaction is tRNA(Asx) + L-aspartate + ATP = L-aspartyl-tRNA(Asx) + AMP + diphosphate. In terms of biological role, aspartyl-tRNA synthetase with relaxed tRNA specificity since it is able to aspartylate not only its cognate tRNA(Asp) but also tRNA(Asn). Reaction proceeds in two steps: L-aspartate is first activated by ATP to form Asp-AMP and then transferred to the acceptor end of tRNA(Asp/Asn). This Bartonella tribocorum (strain CIP 105476 / IBS 506) protein is Aspartate--tRNA(Asp/Asn) ligase.